A 248-amino-acid chain; its full sequence is Ubiquinone biosynthesis O-methyltransferase (248 aa).

Residues arginine 41, glycine 72, aspartate 93, and methionine 136 each contribute to the S-adenosyl-L-methionine site.

This sequence belongs to the methyltransferase superfamily. UbiG/COQ3 family.

The enzyme catalyses a 3-demethylubiquinol + S-adenosyl-L-methionine = a ubiquinol + S-adenosyl-L-homocysteine + H(+). The catalysed reaction is a 3-(all-trans-polyprenyl)benzene-1,2-diol + S-adenosyl-L-methionine = a 2-methoxy-6-(all-trans-polyprenyl)phenol + S-adenosyl-L-homocysteine + H(+). Its pathway is cofactor biosynthesis; ubiquinone biosynthesis. Its function is as follows. O-methyltransferase that catalyzes the 2 O-methylation steps in the ubiquinone biosynthetic pathway. In Brucella abortus (strain 2308), this protein is Ubiquinone biosynthesis O-methyltransferase.